The chain runs to 87 residues: Small ribosomal subunit protein uS15 (87 aa).

It belongs to the universal ribosomal protein uS15 family. In terms of assembly, part of the 30S ribosomal subunit. Forms a bridge to the 50S subunit in the 70S ribosome, contacting the 23S rRNA.

Its function is as follows. One of the primary rRNA binding proteins, it binds directly to 16S rRNA where it helps nucleate assembly of the platform of the 30S subunit by binding and bridging several RNA helices of the 16S rRNA. Functionally, forms an intersubunit bridge (bridge B4) with the 23S rRNA of the 50S subunit in the ribosome. The polypeptide is Small ribosomal subunit protein uS15 (Acetivibrio thermocellus (strain ATCC 27405 / DSM 1237 / JCM 9322 / NBRC 103400 / NCIMB 10682 / NRRL B-4536 / VPI 7372) (Clostridium thermocellum)).